Consider the following 332-residue polypeptide: Endo-1,4-beta-xylanase B (332 aa).

The region spanning 2 to 331 (STEIPSLSAS…KDSFWRIIGQ (330 aa)) is the GH10 domain. Glu-134 serves as the catalytic Proton donor. Residue Glu-241 is the Nucleophile of the active site.

Belongs to the glycosyl hydrolase 10 (cellulase F) family. Cytoplasmic xylanase subfamily.

It localises to the cytoplasm. It catalyses the reaction Endohydrolysis of (1-&gt;4)-beta-D-xylosidic linkages in xylans.. Its pathway is glycan degradation; xylan degradation. With respect to regulation, completely inhibited by Ag(2+), Cu(2+), Hg(2+), Mn(2+), Pb(2+) and Sn(2+). Strongly inhibited by Fe(2+) and Zn(2+). Co(2+) and Ni(2+) cause little inhibition while Ca(2+) and Mg(2+) do not affect enzyme activity, and Ba(2+) produces a small stimulating effect. Irreversibly inactivated by SDS in vitro. In terms of biological role, plays a role in plant xylan biodegradation, probably via the hydrolysis of short xylooligosaccharides resulting from extracellular xylan hydrolysis, once they have been transported inside cells. Shows similar activity on xylans of different rate of arabinose or methylglucuronic substitution. Also displays high activity on aryl-xylosides. Is active on xylotetraose and xylotriose, but does not hydrolyze xylobiose, indicating that XynB is a xylanase and not a beta-xylosidase. This chain is Endo-1,4-beta-xylanase B (xynB), found in Paenibacillus barcinonensis.